Consider the following 227-residue polypeptide: Ornithine decarboxylase antizyme 1 (227 aa).

Residues 20 to 50 form a disordered region; the sequence is EGDKPSATVHATRTMPLLSLHSRGGRSSESS. The segment covering 36 to 50 has biased composition (low complexity); that stretch reads LLSLHSRGGRSSESS.

The protein belongs to the ODC antizyme family. As to quaternary structure, interacts with ODC1 and thereby sterically blocks ODC homodimerization. Forms a ternary complex with PSMB4 and OAZ1 before PSMB4 is incorporated into the 20S proteasome. Interacts with AZIN2; this interaction disrupts the interaction between the antizyme and ODC1. Interacts with FAM171A1.

In terms of biological role, ornithine decarboxylase (ODC) antizyme protein that negatively regulates ODC activity and intracellular polyamine biosynthesis and uptake in response to increased intracellular polyamine levels. Binds to ODC monomers, inhibiting the assembly of the functional ODC homodimer, and targets the monomers for ubiquitin-independent proteolytic destruction by the 26S proteasome. Triggers ODC degradation by inducing the exposure of a cryptic proteasome-interacting surface of ODC. Stabilizes AZIN2 by interfering with its ubiquitination. Also inhibits cellular uptake of polyamines by inactivating the polyamine uptake transporter. SMAD1/OAZ1/PSMB4 complex mediates the degradation of the CREBBP/EP300 repressor SNIP1. Involved in the translocation of AZIN2 from ER-Golgi intermediate compartment (ERGIC) to the cytosol. This chain is Ornithine decarboxylase antizyme 1 (OAZ1), found in Bos taurus (Bovine).